The primary structure comprises 262 residues: Probable esterase azaC (262 aa).

Residues S119, D188, and H216 each act as charge relay system in the active site.

The protein belongs to the LovG family.

It participates in secondary metabolite biosynthesis. Probable esterase; part of the gene cluster that mediates the biosynthesis of azaphilones, a class of fungal metabolites characterized by a highly oxygenated pyrano-quinone bicyclic core and exhibiting a broad range of bioactivities. In the first step, the non-reducing polyketide synthase azaA forms the hexaketide precursor from successive condensations of five malonyl-CoA units, presumably with a simple acetyl-CoA starter unit. The reactive polyketide chain then undergoes a PT-mediated C2-C7 cyclization to afford the aromatic ring and is eventually released as an aldehyde through the R-domain. The putative ketoreductase azaE is proposed to catalyze the reduction of the terminal ketone resulting in the early culture product FK17-P2a. The monooxygenase azaH was demonstrated to be the only enzyme required to convert FK17-P2a to azanigerone E. AzaH first hydroxylates the benzaldehyde intermediate FK17-P2a at C4, which triggers the formation of the pyran-ring to afford azanigerone E. In parallel, the 2,4-dimethylhexanoyl chain is synthesized by the HR-PKS azaB and is proposed to be transferred to the C4-hydroxyl of azanigerone E by the acyltransferase azaD directly from the ACP domain of azaB. Alternatively, the 2,4-dimethyl-hexanoyl chain may be offloaded from the HR-PKS as a carboxylic acid and converted to an acyl-CoA by azaF. The resulting acyl-CoA molecule could then be taken up as a substrate by AzaD to form azanigerone B. To yield the carboxylic acid substituent in azanigerone A, the hydroxypropyl side chain of azanigerone B would need to undergo a C-C oxidative cleavage catalyzed by cytochrome P450 AzaI. AzaI is proposed to act on a vicinal diol that leads to a C-C bond scission either through an alkoxyradical intermediate or a peroxy complex. In the biosynthesis of azanigerone A, azanigerone B first undergoes hydroxylation at C10, possibly catalyzed by one of the two FAD-dependent monooxygenases encoded in the cluster, azaG or azaL, resulting in the vicinal diol azanigerone C. Oxidative cleavage of azanigerone C by azaI would yield the corresponding aldehyde derivative of azanigerone A. Finally, the dehydrogenase azaJ is proposed to convert the aldehyde functional group into the carboxylic acid, completing the conversion from azanigerone B to azanigerone A. Alternatively, the oxidation of aldehyde to carboxylic acid may be catalyzed by the same P450 enzyme azaI via consecutive oxidation or by endogenous alcohol dehydrogenase. The polypeptide is Probable esterase azaC (Aspergillus niger (strain ATCC 1015 / CBS 113.46 / FGSC A1144 / LSHB Ac4 / NCTC 3858a / NRRL 328 / USDA 3528.7)).